The chain runs to 181 residues: ATP-dependent protease subunit HslV (181 aa).

The active site involves threonine 7. Na(+) is bound by residues alanine 166, cysteine 169, and threonine 172.

This sequence belongs to the peptidase T1B family. HslV subfamily. As to quaternary structure, a double ring-shaped homohexamer of HslV is capped on each side by a ring-shaped HslU homohexamer. The assembly of the HslU/HslV complex is dependent on binding of ATP.

It is found in the cytoplasm. The enzyme catalyses ATP-dependent cleavage of peptide bonds with broad specificity.. Allosterically activated by HslU binding. Functionally, protease subunit of a proteasome-like degradation complex believed to be a general protein degrading machinery. In Anaeromyxobacter dehalogenans (strain 2CP-1 / ATCC BAA-258), this protein is ATP-dependent protease subunit HslV.